The following is a 93-amino-acid chain: Small ribosomal subunit protein uS19 (93 aa).

Belongs to the universal ribosomal protein uS19 family.

Its function is as follows. Protein S19 forms a complex with S13 that binds strongly to the 16S ribosomal RNA. This is Small ribosomal subunit protein uS19 from Oenococcus oeni (strain ATCC BAA-331 / PSU-1).